Reading from the N-terminus, the 178-residue chain is ATP-dependent protease subunit HslV (178 aa).

Threonine 7 is a catalytic residue. Na(+) contacts are provided by glycine 162, cysteine 165, and threonine 168.

This sequence belongs to the peptidase T1B family. HslV subfamily. In terms of assembly, a double ring-shaped homohexamer of HslV is capped on each side by a ring-shaped HslU homohexamer. The assembly of the HslU/HslV complex is dependent on binding of ATP.

It localises to the cytoplasm. The catalysed reaction is ATP-dependent cleavage of peptide bonds with broad specificity.. Its activity is regulated as follows. Allosterically activated by HslU binding. Its function is as follows. Protease subunit of a proteasome-like degradation complex believed to be a general protein degrading machinery. In Azoarcus sp. (strain BH72), this protein is ATP-dependent protease subunit HslV.